Reading from the N-terminus, the 397-residue chain is Acetate kinase (397 aa).

Mg(2+) is bound at residue N7. K14 contributes to the ATP binding site. R90 contributes to the substrate binding site. The active-site Proton donor/acceptor is D147. ATP-binding positions include 207-211 (HLGNG), 282-284 (DFR), and 330-334 (GLGEN). A Mg(2+)-binding site is contributed by E383.

It belongs to the acetokinase family. As to quaternary structure, homodimer. The cofactor is Mg(2+). It depends on Mn(2+) as a cofactor.

It is found in the cytoplasm. It catalyses the reaction acetate + ATP = acetyl phosphate + ADP. It participates in metabolic intermediate biosynthesis; acetyl-CoA biosynthesis; acetyl-CoA from acetate: step 1/2. Functionally, catalyzes the formation of acetyl phosphate from acetate and ATP. Can also catalyze the reverse reaction. The polypeptide is Acetate kinase (Clostridium botulinum (strain Loch Maree / Type A3)).